The primary structure comprises 180 residues: Ribulose bisphosphate carboxylase small subunit, chloroplastic 4 (180 aa).

A chloroplast-targeting transit peptide spans 1–56 (MASSIVSSAAVATRANGAQASMVGPFTGLKSTASFPVSRKQNLDITSIASNGGRVR).

The protein belongs to the RuBisCO small chain family. In terms of assembly, heterohexadecamer of 8 large and 8 small subunits.

The protein resides in the plastid. It is found in the chloroplast. Functionally, ruBisCO catalyzes two reactions: the carboxylation of D-ribulose 1,5-bisphosphate, the primary event in carbon dioxide fixation, as well as the oxidative fragmentation of the pentose substrate. Both reactions occur simultaneously and in competition at the same active site. Although the small subunit is not catalytic it is essential for maximal activity. This chain is Ribulose bisphosphate carboxylase small subunit, chloroplastic 4, found in Solanum tuberosum (Potato).